A 594-amino-acid polypeptide reads, in one-letter code: ATP-dependent zinc metalloprotease FtsH 1 (594 aa).

Residues 1–2 (MR) lie on the Cytoplasmic side of the membrane. The helical transmembrane segment at 3–23 (WWAGAALLLAALLFGRPAAAM) threads the bilayer. Residues 24 to 92 (EAQPVAYSEF…RVEFVRPADP (69 aa)) are Extracellular-facing. The helical transmembrane segment at 93 to 113 (IAFRTLLRFIPPLLILGAILW) threads the bilayer. Over 114–594 (FTRRTAGGSG…ANSRGDEGNQ (481 aa)) the chain is Cytoplasmic. ATP is bound at residue 186–193 (GPPGTGKT). A Zn(2+)-binding site is contributed by His408. Residue Glu409 is part of the active site. Zn(2+) is bound by residues His412 and Asp485.

This sequence in the central section; belongs to the AAA ATPase family. It in the C-terminal section; belongs to the peptidase M41 family. Homohexamer. It depends on Zn(2+) as a cofactor.

It is found in the cell membrane. Acts as a processive, ATP-dependent zinc metallopeptidase for both cytoplasmic and membrane proteins. Plays a role in the quality control of integral membrane proteins. The sequence is that of ATP-dependent zinc metalloprotease FtsH 1 from Symbiobacterium thermophilum (strain DSM 24528 / JCM 14929 / IAM 14863 / T).